Reading from the N-terminus, the 431-residue chain is Septin-11 (431 aa).

Residue alanine 2 is modified to N-acetylalanine. Serine 9 is subject to Phosphoserine. The Septin-type G domain maps to 38-304 (QGFCFNILCV…ELYRRCKLEE (267 aa)). A G1 motif region spans residues 48 to 55 (GETGIGKS). GTP-binding positions include 48–55 (GETGIGKS), glycine 103, 184–192 (KADTIAKNE), glycine 238, and arginine 253. The G3 motif stretch occupies residues 100-103 (DTVG). The tract at residues 183–186 (AKAD) is G4 motif. A coiled-coil region spans residues 320–413 (QETYEAKRNE…LLQSQAQQSG (94 aa)). Residues 400–431 (AAAQLLQSQAQQSGAQQTKKDKDKKNPWLCTE) form a disordered region. Low complexity predominate over residues 401–416 (AAQLLQSQAQQSGAQQ).

This sequence belongs to the TRAFAC class TrmE-Era-EngA-EngB-Septin-like GTPase superfamily. Septin GTPase family. Septins polymerize into heterooligomeric protein complexes that form filaments, and can associate with cellular membranes, actin filaments and microtubules. Forms homooligomers. GTPase activity is required for filament formation. Interacts with SEPTIN7, SEPTIN9 and SEPTIN12. Expressed in the cerebral cortex (at protein level).

The protein localises to the cytoplasm. Its subcellular location is the cytoskeleton. The protein resides in the synapse. It localises to the cell projection. It is found in the dendritic spine. The protein localises to the axon. In terms of biological role, filament-forming cytoskeletal GTPase. May play a role in cytokinesis (Potential). May play a role in the cytoarchitecture of neurons, including dendritic arborization and dendritic spines, and in GABAergic synaptic connectivity. This is Septin-11 from Mus musculus (Mouse).